A 751-amino-acid chain; its full sequence is Semaphorin-3C (751 aa).

Positions 1 to 21 (MAVLALHAVFGIFIYFSSVKG) are cleaved as a signal peptide. The region spanning 28–511 (RVFLTFNELQ…SEEGVTQVPL (484 aa)) is the Sema domain. Asparagine 81 carries N-linked (GlcNAc...) asparagine glycosylation. The cysteines at positions 101 and 112 are disulfide-linked. An N-linked (GlcNAc...) asparagine glycan is attached at asparagine 123. Intrachain disulfides connect cysteine 130-cysteine 139, cysteine 266-cysteine 378, and cysteine 290-cysteine 338. Asparagine 268 carries N-linked (GlcNAc...) asparagine glycosylation. The N-linked (GlcNAc...) asparagine glycan is linked to asparagine 465. A disulfide bridge connects residues cysteine 514 and cysteine 532. The 85-residue stretch at 571-655 (AYRNAAETVQ…TENNFKQTLA (85 aa)) folds into the Ig-like C2-type domain. Asparagine 585 and asparagine 586 each carry an N-linked (GlcNAc...) asparagine glycan. Cysteine 643 and cysteine 709 form a disulfide bridge. Positions 712–731 (SRQQGQRREEPQKMRGDYSK) are enriched in basic and acidic residues. The disordered stretch occupies residues 712–751 (SRQQGQRREEPQKMRGDYSKLKALINSRKSRNRRNQLPAS).

The protein belongs to the semaphorin family. Collapsin-1, -2, -3, and -5 bind to overlapping but distinct axon tracts.

Its subcellular location is the secreted. Its function is as follows. Induces the collapse and paralysis of neuronal growth cones. Could potentially act as repulsive cues toward specific neuronal populations. Binds to neuropilin. The chain is Semaphorin-3C (SEMA3C) from Gallus gallus (Chicken).